A 159-amino-acid polypeptide reads, in one-letter code: Large ribosomal subunit protein uL15 (159 aa).

The tract at residues 14-44 is disordered; it reads ASRKRVGRGRATGWGCTSGRGNKGQNSRAGA. The span at 23–35 shows a compositional bias: gly residues; sequence RATGWGCTSGRGN.

Belongs to the universal ribosomal protein uL15 family. Part of the 50S ribosomal subunit.

Binds to the 23S rRNA. This is Large ribosomal subunit protein uL15 from Solidesulfovibrio magneticus (strain ATCC 700980 / DSM 13731 / RS-1) (Desulfovibrio magneticus).